A 205-amino-acid polypeptide reads, in one-letter code: Outer-membrane lipoprotein LolB (205 aa).

Residues 1–17 form the signal peptide; the sequence is MFLRHCITFTLIALLAG. C18 carries the N-palmitoyl cysteine lipid modification. The S-diacylglycerol cysteine moiety is linked to residue C18.

The protein belongs to the LolB family. As to quaternary structure, monomer.

It localises to the cell outer membrane. Functionally, plays a critical role in the incorporation of lipoproteins in the outer membrane after they are released by the LolA protein. This chain is Outer-membrane lipoprotein LolB, found in Pseudomonas putida (strain ATCC 47054 / DSM 6125 / CFBP 8728 / NCIMB 11950 / KT2440).